The chain runs to 546 residues: Chaperonin GroEL (546 aa).

Residues 29-32 (TMGP), Lys-50, 86-90 (DGTTT), Gly-414, and Asp-492 each bind ATP.

This sequence belongs to the chaperonin (HSP60) family. As to quaternary structure, forms a cylinder of 14 subunits composed of two heptameric rings stacked back-to-back. Interacts with the co-chaperonin GroES.

It is found in the cytoplasm. It carries out the reaction ATP + H2O + a folded polypeptide = ADP + phosphate + an unfolded polypeptide.. Together with its co-chaperonin GroES, plays an essential role in assisting protein folding. The GroEL-GroES system forms a nano-cage that allows encapsulation of the non-native substrate proteins and provides a physical environment optimized to promote and accelerate protein folding. This Helicobacter pylori (strain ATCC 700392 / 26695) (Campylobacter pylori) protein is Chaperonin GroEL.